Here is a 693-residue protein sequence, read N- to C-terminus: Sodium-dependent dopamine transporter (693 aa).

Residues 1-56 lie on the Cytoplasmic side of the membrane; the sequence is MSEGRCSVAHMSSVVAPAKEANAMGPKAVELVLVKEQNGVQLTNSTLLNPPQSPTE. A discontinuously helical membrane pass occupies residues 57 to 95; that stretch reads AQDRETWSKKADFLLSVIGFAVDLANVWRFPYLCYKNGG. Na(+) contacts are provided by Gly75, Ala77, Val78, Asp79, and Asn82. Asp79 is a binding site for dopamine. The next 2 membrane-spanning stretches (helical) occupy residues 96 to 127 and 128 to 171; these read GAFL…NREG and AAGV…LSSF. Dopamine-binding residues include Ser149 and Gly153. The Extracellular segment spans residues 172-233; the sequence is TTELPWTHCN…SQGIDDLGPP (62 aa). Residues Cys180 and Cys189 are joined by a disulfide bond. N-linked (GlcNAc...) asparagine glycans are attached at residues Asn181, Asn196, and Asn202. The next 2 membrane-spanning stretches (helical) occupy residues 234-253 and 254-284; these read RWQL…FSLW and KGVK…GITL. At 285 to 303 the chain is on the extracellular side; it reads PGAVDAIRAYLSVDFHRLC. The discontinuously helical transmembrane segment at 304 to 332 threads the bilayer; the sequence is EASVWIDAAIQICFSLGVGLGVLIAFSSY. Gln314 provides a ligand contact to chloride. Position 317 (Phe317) interacts with dopamine. Positions 318 and 350 each coordinate Na(+). Ser318 is a chloride binding site. Residues 333 to 373 form a helical membrane-spanning segment; it reads NKFTNNCYRDAIITTSVNSLTSFSSGFVVFSFLGYMAQKHS. Residue Ser354 coordinates chloride. Over 374-397 the chain is Extracellular; that stretch reads VPIGDVAKDGPGLIFIIYPEALAT. A run of 3 helical transmembrane segments spans residues 398-439, 440-463, and 464-496; these read LPLS…QLLH, RHRE…CVTN, and GGIY…AWFY. Residues Leu415, Asp418, and Ser419 each contribute to the Na(+) site. Residues Ser419 and Ala420 each contribute to the dopamine site. The Cytoplasmic portion of the chain corresponds to 497-513; it reads GVWQFSDDIKQMTGRRP. The chain crosses the membrane as a helical span at residues 514–539; that stretch reads SLYWRLCWKFVSPCFLLFVVVVSIAT. Topologically, residues 540-550 are extracellular; sequence FRPPHYGAYVF. The chain crosses the membrane as a helical span at residues 551–580; that stretch reads PEWATALGWAIAASSMSVVPIYAAYKLCSL. The interval 558-587 is interaction with TGFB1I1; the sequence is GWAIAASSMSVVPIYAAYKLCSLPGSSREK. Residues 581–693 lie on the Cytoplasmic side of the membrane; it reads PGSSREKLAY…VESTGLCSVY (113 aa).

It belongs to the sodium:neurotransmitter symporter (SNF) (TC 2.A.22) family. SLC6A3 subfamily. Monomer. Homooligomer; disulfide-linked. Interacts with PRKCABP and TGFB1I1. Interacts (via N-terminus) with SYNGR3 (via N-terminus). Interacts with SLC18A2. Interacts with TOR1A (ATP-bound); TOR1A regulates SLC6A3 subcellular location. Interacts with alpha-synuclein/SNCA. Interacts with SEPTIN4. As to expression, expressed in the neurons of the substantia nigra of the brain.

The protein resides in the cell membrane. The protein localises to the cell projection. It localises to the neuron projection. It is found in the axon. It catalyses the reaction dopamine(out) + chloride(out) + Na(+)(out) = dopamine(in) + chloride(in) + Na(+)(in). The enzyme catalyses (R)-noradrenaline(out) + chloride(out) + Na(+)(out) = (R)-noradrenaline(in) + chloride(in) + Na(+)(in). The catalysed reaction is dopamine(out) + chloride(out) + 2 Na(+)(out) = dopamine(in) + chloride(in) + 2 Na(+)(in). Its activity is regulated as follows. Inhibited by GBR 12909 dihydrochloride, amphetamine and cocaine. Inhibited by zinc ions. In terms of biological role, mediates sodium- and chloride-dependent transport of dopamine. Also mediates sodium- and chloride-dependent transport of norepinephrine (also known as noradrenaline). Regulator of light-dependent retinal hyaloid vessel regression, downstream of OPN5 signaling. This is Sodium-dependent dopamine transporter (SLC6A3) from Bos taurus (Bovine).